A 249-amino-acid polypeptide reads, in one-letter code: Adapter protein MecA (249 aa).

This sequence belongs to the MecA family. As to quaternary structure, homodimer.

Functionally, enables the recognition and targeting of unfolded and aggregated proteins to the ClpC protease or to other proteins involved in proteolysis. This is Adapter protein MecA from Streptococcus thermophilus (strain ATCC BAA-250 / LMG 18311).